The chain runs to 126 residues: MELTLKTAKRVEIIDITDQVERCVESRDGLVLVYTPHTTTALVINEGERGLLEDILEFMEKLVPYGKGYKHDRLDSNADAHLKATLLGNSVVVPVESGKLALGTWQRILFLEFDGPRTRRVIVKAL.

Belongs to the UPF0047 family.

In Archaeoglobus fulgidus (strain ATCC 49558 / DSM 4304 / JCM 9628 / NBRC 100126 / VC-16), this protein is UPF0047 protein AF_2050.